A 288-amino-acid polypeptide reads, in one-letter code: Glandicoline B O-methyltransferase roqN (288 aa).

S-adenosyl-L-methionine contacts are provided by residues Thr-57, Asp-82, and 109–110; that span reads DA.

The protein belongs to the class I-like SAM-binding methyltransferase superfamily.

The catalysed reaction is glandicoline B + S-adenosyl-L-methionine = meleagrin + S-adenosyl-L-homocysteine + H(+). It functions in the pathway alkaloid biosynthesis. Functionally, glandicoline B O-methyltransferase; part of the gene cluster that mediates the biosynthesis of the mycotoxin meleagrin. The first stage is catalyzed by the dipeptide synthase roqA which condenses histidine and tryptophan to produce histidyltryptophanyldiketopiperazine (HTD). HTD is then converted to roquefortine C through two possible pathways. In the first pathway, prenyltransferase roqD transforms HTD to the intermediate roquefortine D, which is in turn converted to roquefortine C by the cytochrome P450 monooxygenase roqR. In the second pathway, HTD is first converted to the intermediate dehydrohistidyltryptophanyldi-ketopiperazine (DHTD) by roqR which is then prenylated by roqD to form roquefortine C. Roquefortine C can be further transformed to meleagrin via three more reactions including oxydation to glandicolin A by roqM, which is further reduced to glandicoline B by roqO. Finally, glandicoline B is converted to meleagrin by the glandicoline B O-methyltransferase roqN. More studies identified further branching and additional metabolites produced by the roquefortine/meleagrin cluster, including roquefortine F, roquefortine L, roquefortine M, roquefortine N and neoxaline. In Penicillium rubens (strain ATCC 28089 / DSM 1075 / NRRL 1951 / Wisconsin 54-1255) (Penicillium chrysogenum), this protein is Glandicoline B O-methyltransferase roqN.